The chain runs to 327 residues: Nucleotide-binding protein Mflv_3714 (327 aa).

Over residues 1-22 (MTRQGMRDDLRGEADSVVHDGT) the composition is skewed to basic and acidic residues. A disordered region spans residues 1–29 (MTRQGMRDDLRGEADSVVHDGTDDIDNEN). 50-57 (GLSGAGRG) is a binding site for ATP. 101-104 (DVRS) is a GTP binding site.

The protein belongs to the RapZ-like family.

Its function is as follows. Displays ATPase and GTPase activities. This chain is Nucleotide-binding protein Mflv_3714, found in Mycolicibacterium gilvum (strain PYR-GCK) (Mycobacterium gilvum (strain PYR-GCK)).